The following is a 28-amino-acid chain: Potassium channel toxin alpha-KTx 9.10 (28 aa).

Cystine bridges form between Cys-3–Cys-19, Cys-6–Cys-24, and Cys-10–Cys-26.

The protein belongs to the short scorpion toxin superfamily. Potassium channel inhibitor family. Alpha-KTx 09 subfamily. In terms of tissue distribution, expressed by the venom gland.

It localises to the secreted. Its function is as follows. Blocks Shaker potassium channels. This is Potassium channel toxin alpha-KTx 9.10 from Mesobuthus eupeus (Lesser Asian scorpion).